Here is a 287-residue protein sequence, read N- to C-terminus: Bifunctional protein FolD (287 aa).

NADP(+) is bound by residues 160–162, Ser189, and Thr230; that span reads GRS.

It belongs to the tetrahydrofolate dehydrogenase/cyclohydrolase family. Homodimer.

The enzyme catalyses (6R)-5,10-methylene-5,6,7,8-tetrahydrofolate + NADP(+) = (6R)-5,10-methenyltetrahydrofolate + NADPH. It carries out the reaction (6R)-5,10-methenyltetrahydrofolate + H2O = (6R)-10-formyltetrahydrofolate + H(+). It participates in one-carbon metabolism; tetrahydrofolate interconversion. In terms of biological role, catalyzes the oxidation of 5,10-methylenetetrahydrofolate to 5,10-methenyltetrahydrofolate and then the hydrolysis of 5,10-methenyltetrahydrofolate to 10-formyltetrahydrofolate. This chain is Bifunctional protein FolD, found in Chlamydia trachomatis serovar D (strain ATCC VR-885 / DSM 19411 / UW-3/Cx).